The sequence spans 401 residues: Argininosuccinate synthase (401 aa).

9-17 (AYSGGLDTS) provides a ligand contact to ATP. Tyrosine 86 serves as a coordination point for L-citrulline. Glycine 116 serves as a coordination point for ATP. L-aspartate-binding residues include threonine 118, asparagine 122, and aspartate 123. Asparagine 122 lines the L-citrulline pocket. 5 residues coordinate L-citrulline: arginine 126, serine 174, serine 183, glutamate 259, and tyrosine 271.

Belongs to the argininosuccinate synthase family. Type 1 subfamily. As to quaternary structure, homotetramer.

It localises to the cytoplasm. It catalyses the reaction L-citrulline + L-aspartate + ATP = 2-(N(omega)-L-arginino)succinate + AMP + diphosphate + H(+). Its pathway is amino-acid biosynthesis; L-arginine biosynthesis; L-arginine from L-ornithine and carbamoyl phosphate: step 2/3. This is Argininosuccinate synthase from Bacillus cytotoxicus (strain DSM 22905 / CIP 110041 / 391-98 / NVH 391-98).